The following is a 292-amino-acid chain: T-box transcription factor tbx-9 (292 aa).

Residues 10-194 constitute a DNA-binding region (T-box); it reads GSQETLWKIF…HNSFAKGFRD (185 aa). 2 disordered regions span residues 192 to 227 and 265 to 292; these read FRDG…EVAP and STPS…DIVG. Composition is skewed to low complexity over residues 204–223 and 265–275; these read PSYS…RSPP and STPSSSSSELS. Over residues 280–292 the composition is skewed to acidic residues; that stretch reads EDQEVEEDIDIVG.

It is found in the nucleus. Its function is as follows. Transcription factor. Involved in the control of early morphogenesis of the intestine, hypodermis and body-wall muscle. Involved in regulating expression of vab-7. Appears to have partially redundant function to tbx-8. Positively modulates expression of homeobox protein lin-39, perhaps by binding to regulatory regions of the lin-39 gene, acting in the vulval lineage. The sequence is that of T-box transcription factor tbx-9 (tbx-9) from Caenorhabditis elegans.